The following is a 189-amino-acid chain: Pyridoxal 5'-phosphate synthase subunit PdxT (189 aa).

Residue 47-49 coordinates L-glutamine; that stretch reads GES. The active-site Nucleophile is cysteine 79. L-glutamine-binding positions include arginine 106 and 135-136; that span reads IR. Residues histidine 171 and glutamate 173 each act as charge relay system in the active site.

It belongs to the glutaminase PdxT/SNO family. As to quaternary structure, in the presence of PdxS, forms a dodecamer of heterodimers. Only shows activity in the heterodimer.

It catalyses the reaction aldehydo-D-ribose 5-phosphate + D-glyceraldehyde 3-phosphate + L-glutamine = pyridoxal 5'-phosphate + L-glutamate + phosphate + 3 H2O + H(+). It carries out the reaction L-glutamine + H2O = L-glutamate + NH4(+). It participates in cofactor biosynthesis; pyridoxal 5'-phosphate biosynthesis. Catalyzes the hydrolysis of glutamine to glutamate and ammonia as part of the biosynthesis of pyridoxal 5'-phosphate. The resulting ammonia molecule is channeled to the active site of PdxS. The sequence is that of Pyridoxal 5'-phosphate synthase subunit PdxT from Caldanaerobacter subterraneus subsp. tengcongensis (strain DSM 15242 / JCM 11007 / NBRC 100824 / MB4) (Thermoanaerobacter tengcongensis).